The sequence spans 843 residues: Glycogen phosphorylase, brain form (843 aa).

Ala-2 carries the post-translational modification N-acetylalanine. Ser-15 bears the Phosphoserine; by PHK; in form phosphorylase A mark. 3 residues coordinate AMP: Asp-43, Tyr-197, and Arg-310. Tyr-197 carries the post-translational modification Phosphotyrosine. The residue at position 473 (Tyr-473) is a Phosphotyrosine. Lys-569 is a pyridoxal 5'-phosphate binding site. The tract at residues 677–678 is pyridoxal 5'-phosphate; the sequence is TG. The residue at position 681 (Lys-681) is an N6-(pyridoxal phosphate)lysine.

This sequence belongs to the glycogen phosphorylase family. Homodimer. Dimers associate into a tetramer to form the enzymatically active phosphorylase A. It depends on pyridoxal 5'-phosphate as a cofactor. In terms of processing, phosphorylated. Phosphorylation of Ser-15 converts phosphorylase B (unphosphorylated) to phosphorylase A.

It catalyses the reaction [(1-&gt;4)-alpha-D-glucosyl](n) + phosphate = [(1-&gt;4)-alpha-D-glucosyl](n-1) + alpha-D-glucose 1-phosphate. Its activity is regulated as follows. Activity of phosphorylase is controlled both by allosteric means (through the non-covalent binding of metabolites) and by covalent modification. Thus AMP allosterically activates, whereas ATP, ADP, and glucose-6-phosphate allosterically inhibit, phosphorylase B. Activated upon phosphorylation. Its function is as follows. Glycogen phosphorylase that regulates glycogen mobilization. Phosphorylase is an important allosteric enzyme in carbohydrate metabolism. Enzymes from different sources differ in their regulatory mechanisms and in their natural substrates. However, all known phosphorylases share catalytic and structural properties. The polypeptide is Glycogen phosphorylase, brain form (Homo sapiens (Human)).